The sequence spans 597 residues: Centrosomal protein of 70 kDa (597 aa).

The tract at residues 1 to 23 is disordered; it reads MFPVAPKPQDSSQASDRLMTEKQ. Coiled coils occupy residues 66–179 and 254–326; these read MRQN…QMEV and TYKG…KKAE. The stretch at 483-516 is one TPR repeat; it reads NGVYPRMNEVYTRLGEMNNAVRNLQELLELDSSS.

In terms of assembly, directly interacts with tubulin-gamma; this interaction determines centrosomal localization.

The protein localises to the cytoplasm. The protein resides in the cytoskeleton. Its subcellular location is the microtubule organizing center. It is found in the centrosome. In terms of biological role, plays a role in the organization of both preexisting and nascent microtubules in interphase cells. During mitosis, required for the organization and orientation of the mitotic spindle. This chain is Centrosomal protein of 70 kDa (CEP70), found in Pongo abelii (Sumatran orangutan).